A 300-amino-acid chain; its full sequence is tRNA dimethylallyltransferase (300 aa).

Residue 11–18 (GPTAVGKS) coordinates ATP. 13–18 (TAVGKS) is a substrate binding site. Positions 35–38 (DSVQ) are interaction with substrate tRNA.

The protein belongs to the IPP transferase family. In terms of assembly, monomer. The cofactor is Mg(2+).

The enzyme catalyses adenosine(37) in tRNA + dimethylallyl diphosphate = N(6)-dimethylallyladenosine(37) in tRNA + diphosphate. Catalyzes the transfer of a dimethylallyl group onto the adenine at position 37 in tRNAs that read codons beginning with uridine, leading to the formation of N6-(dimethylallyl)adenosine (i(6)A). This chain is tRNA dimethylallyltransferase, found in Borrelia hermsii (strain HS1 / DAH).